Consider the following 166-residue polypeptide: Olee1-like protein (166 aa).

An N-terminal signal peptide occupies residues 1–23 (MAKSIIIQAPALCFLSLLGFAYS). Cystine bridges form between Cys35–Cys106, Cys38–Cys150, and Cys59–Cys94.

Belongs to the Ole e I family.

The protein resides in the secreted. This chain is Olee1-like protein, found in Betula pendula (European white birch).